Reading from the N-terminus, the 450-residue chain is Na(+)/H(+) antiporter NhaA 2 (450 aa).

The next 12 helical transmembrane spans lie at 43–63, 86–106, 124–144, 155–175, 185–205, 208–228, 234–254, 258–278, 299–319, 326–346, 364–384, and 398–418; these read VGGAVLLVASAVALVWANSPW, LTLGTWAADGLLAVFFLVVGL, ALPMAAAVGGMVVPALIFVAV, GWAIPTATDIAFAVAVLAVIS, FLLTLAVVDDLLAVTVIAVFY, EINLTALGLSIVPLALFALCV, SWWLLLPLGVATWVLVHESGV, VAGVLLGFTVPVLRSVAAGGP, VAVPVFAFFAAGVAIGGVSGL, PITLGIILGLVVGKPVGIFLT, WIDVFGVALLAGIGFTVSLLI, and FVKVGVLTGSLVAALIAAVLL.

Belongs to the NhaA Na(+)/H(+) (TC 2.A.33) antiporter family.

The protein localises to the cell membrane. It carries out the reaction Na(+)(in) + 2 H(+)(out) = Na(+)(out) + 2 H(+)(in). In terms of biological role, na(+)/H(+) antiporter that extrudes sodium in exchange for external protons. The chain is Na(+)/H(+) antiporter NhaA 2 from Mycobacterium sp. (strain JLS).